We begin with the raw amino-acid sequence, 1056 residues long: Sucrose-phosphate synthase (1056 aa).

Basic and acidic residues predominate over residues 112–123 (HVERERGRREAT). The interval 112–132 (HVERERGRREATADMSEDLSE) is disordered. A phosphoserine mark is found at Ser158 and Ser424. The disordered stretch occupies residues 681 to 700 (NWQRIDEGSENSDTDSAGDS).

It belongs to the glycosyltransferase 1 family. Homodimer or homotetramer. Post-translationally, phosphorylated at Ser-158 and Ser-424.

The enzyme catalyses beta-D-fructose 6-phosphate + UDP-alpha-D-glucose = sucrose 6(F)-phosphate + UDP + H(+). Its pathway is glycan biosynthesis; sucrose biosynthesis; sucrose from D-fructose 6-phosphate and UDP-alpha-D-glucose: step 1/2. Activity is regulated by phosphorylation and moderated by concentration of metabolites and light. Functionally, plays a role in photosynthetic sucrose synthesis by catalyzing the rate-limiting step of sucrose biosynthesis from UDP-glucose and fructose- 6-phosphate. Involved in the regulation of carbon partitioning in the leaves of plants. May regulate the synthesis of sucrose and therefore play a major role as a limiting factor in the export of photoassimilates out of the leaf. Plays a role for sucrose availability that is essential for plant growth and fiber elongation. This chain is Sucrose-phosphate synthase (SPS1), found in Spinacia oleracea (Spinach).